Consider the following 126-residue polypeptide: Aspartate 1-decarboxylase (126 aa).

Catalysis depends on S25, which acts as the Schiff-base intermediate with substrate; via pyruvic acid. At S25 the chain carries Pyruvic acid (Ser). T57 serves as a coordination point for substrate. The Proton donor role is filled by Y58. Residue 73 to 75 coordinates substrate; the sequence is GGA.

This sequence belongs to the PanD family. Heterooctamer of four alpha and four beta subunits. Requires pyruvate as cofactor. Is synthesized initially as an inactive proenzyme, which is activated by self-cleavage at a specific serine bond to produce a beta-subunit with a hydroxyl group at its C-terminus and an alpha-subunit with a pyruvoyl group at its N-terminus.

It is found in the cytoplasm. The enzyme catalyses L-aspartate + H(+) = beta-alanine + CO2. Its pathway is cofactor biosynthesis; (R)-pantothenate biosynthesis; beta-alanine from L-aspartate: step 1/1. Catalyzes the pyruvoyl-dependent decarboxylation of aspartate to produce beta-alanine. This chain is Aspartate 1-decarboxylase, found in Stenotrophomonas maltophilia (strain K279a).